Here is a 446-residue protein sequence, read N- to C-terminus: N-succinylarginine dihydrolase (446 aa).

Substrate contacts are provided by residues 19 to 28 (AGLSFGNVAS), asparagine 110, and 137 to 138 (HR). The active site involves glutamate 174. Arginine 213 serves as a coordination point for substrate. Residue histidine 249 is part of the active site. 2 residues coordinate substrate: aspartate 251 and asparagine 364. Catalysis depends on cysteine 370, which acts as the Nucleophile.

It belongs to the succinylarginine dihydrolase family. In terms of assembly, homodimer.

The catalysed reaction is N(2)-succinyl-L-arginine + 2 H2O + 2 H(+) = N(2)-succinyl-L-ornithine + 2 NH4(+) + CO2. It participates in amino-acid degradation; L-arginine degradation via AST pathway; L-glutamate and succinate from L-arginine: step 2/5. In terms of biological role, catalyzes the hydrolysis of N(2)-succinylarginine into N(2)-succinylornithine, ammonia and CO(2). This chain is N-succinylarginine dihydrolase, found in Burkholderia ambifaria (strain MC40-6).